The sequence spans 462 residues: Ketoisovalerate reductase (462 aa).

Residues 34 to 55 (PTAVKPDRADRGDFDPGKYPVD) are disordered. A compositionally biased stretch (basic and acidic residues) spans 38–49 (KPDRADRGDFDP). NADP(+) is bound at residue 72–77 (GPGNVG). The Calmoduling-binding signature appears at 167–184 (ADRLRRYLGRCSSVVFAQ). Catalysis depends on Lys290, which acts as the Proton donor. Residues Asn294, Asn298, and Ser403 each coordinate substrate. Glu415 serves as a coordination point for NADP(+).

This sequence belongs to the ketopantoate reductase family. Homodimer. Binds to calmodulin in a calcium-independent manner.

It catalyses the reaction (R)-2-hydroxy-3-methylbutanoate + NADP(+) = 3-methyl-2-oxobutanoate + NADPH + H(+). Environmental stimuli such as light and salt stress suppress activity through stimulation of calmodulin (CaM) that binds BEA2 and probably impairs its dimerization. In terms of biological role, ketoisovalerate reductase; part of the gene cluster that mediates the biosynthesis of beauvericin (BEA), a non-ribosomal cyclic hexadepsipeptide that shows antibiotic, antifungal, insecticidal, and cancer cell antiproliferative and antihaptotactic activity. Ketoisovalerate reductase BEA2 catalyzes the NADPH-specific reduction of ketoisovaleric acid to hydroxyisovalerate, a precursor for beauvericin biosynthesis. The nonribosomal cyclodepsipeptide synthetase BEA1 then catalyzes the formation of beauvericin via condensation and cyclization of 3 dipeptidol monomers, each composed of one unit of hydroxyisovalerate and one unit of N-methyl-phenylalanine. This chain is Ketoisovalerate reductase, found in Beauveria bassiana (White muscardine disease fungus).